We begin with the raw amino-acid sequence, 420 residues long: Putative epoxide hydrolase (420 aa).

Belongs to the peptidase S33 family.

It functions in the pathway mycotoxin biosynthesis. In terms of biological role, putative epoxide hydrolase; part of the fragmented gene cluster that mediates the biosynthesis of dothistromin (DOTH), a polyketide toxin very similar in structure to the aflatoxin precursor, versicolorin B. The first step of the pathway is the conversion of acetate to norsolorinic acid (NOR) and requires the fatty acid synthase subunits hexA and hexB, as well as the polyketide synthase pksA. PksA combines a hexanoyl starter unit and 7 malonyl-CoA extender units to synthesize the precursor NOR. The hexanoyl starter unit is provided to the acyl-carrier protein (ACP) domain by the fungal fatty acid synthase hexA/hexB. The second step is the conversion of NOR to averantin (AVN) and requires the norsolorinic acid ketoreductase nor1, which catalyzes the dehydration of norsolorinic acid to form (1'S)-averantin. The cytochrome P450 monooxygenase avnA then catalyzes the hydroxylation of AVN to 5'hydroxyaverantin (HAVN). The next step is performed by adhA that transforms HAVN to averufin (AVF). Averufin might then be converted to hydroxyversicolorone by cypX and avfA. Hydroxyversicolorone is further converted versiconal hemiacetal acetate (VHA) by moxY. VHA is then the substrate for the versiconal hemiacetal acetate esterase est1 to yield versiconal (VAL). Versicolorin B synthase vbsA then converts VAL to versicolorin B (VERB) by closing the bisfuran ring. Then, the activity of the versicolorin B desaturase verB leads to versicolorin A (VERA). DotB, a predicted chloroperoxidase, may perform epoxidation of the A-ring of VERA. Alternatively, a cytochrome P450, such as cypX or avnA could catalyze this step. It is also possible that another, uncharacterized, cytochrome P450 enzyme is responsible for this step. Opening of the epoxide could potentially be achieved by the epoxide hydrolase epoA. However, epoA seems not to be required for DOTH biosynthesis, but other epoxide hydrolases may have the ability to complement this hydrolysis. Alternatively, opening of the epoxide ring could be achieved non-enzymatically. The next step is the deoxygenation of ring A to yield the 5,8-dihydroxyanthraquinone which is most likely catalyzed by the NADPH dehydrogenase encoded by ver1. The last stages of DOTH biosynthesis are proposed to involve hydroxylation of the bisfuran. OrdB and norB might have oxidative roles here. An alternative possibility is that cytochrome P450 monoogenases such as avnA and cypX might perform these steps in addition to previously proposed steps. The sequence is that of Putative epoxide hydrolase from Dothistroma septosporum (Red band needle blight fungus).